The sequence spans 321 residues: Bifunctional methyltransferase/endonuclease (321 aa).

The tract at residues 1–86 (MLSVDYENFD…PLGSAEKMRR (86 aa)) is probable methylated-DNA--protein-cysteine methyltransferase. The active site involves C61. Residues 87 to 318 (LIRDGITITN…YDFSTRNTAI (232 aa)) form an endonuclease V region. Positions 145 and 204 each coordinate Mg(2+).

It in the N-terminal section; belongs to the MGMT family. The protein in the C-terminal section; belongs to the endonuclease V family. Mg(2+) serves as cofactor.

The protein resides in the cytoplasm. It catalyses the reaction Endonucleolytic cleavage at apurinic or apyrimidinic sites to products with a 5'-phosphate.. Functionally, DNA repair enzyme involved in the repair of deaminated bases. Selectively cleaves double-stranded DNA at the second phosphodiester bond 3' to a deoxyinosine leaving behind the intact lesion on the nicked DNA. In Thermoplasma volcanium (strain ATCC 51530 / DSM 4299 / JCM 9571 / NBRC 15438 / GSS1), this protein is Bifunctional methyltransferase/endonuclease.